The primary structure comprises 453 residues: Allantoinase (453 aa).

H59, H61, K146, H186, H242, and D315 together coordinate Zn(2+). K146 is modified (N6-carboxylysine).

It belongs to the metallo-dependent hydrolases superfamily. Allantoinase family. Homotetramer. It depends on Zn(2+) as a cofactor. Carboxylation allows a single lysine to coordinate two zinc ions.

The catalysed reaction is (S)-allantoin + H2O = allantoate + H(+). It participates in nitrogen metabolism; (S)-allantoin degradation; allantoate from (S)-allantoin: step 1/1. Its function is as follows. Catalyzes the conversion of allantoin (5-ureidohydantoin) to allantoic acid by hydrolytic cleavage of the five-member hydantoin ring. This Salmonella choleraesuis (strain SC-B67) protein is Allantoinase.